Reading from the N-terminus, the 563-residue chain is Arginine--tRNA ligase (563 aa).

The 'HIGH' region motif lies at 122–132; sequence PNIAKPMSMGH.

The protein belongs to the class-I aminoacyl-tRNA synthetase family. Monomer.

The protein resides in the cytoplasm. The catalysed reaction is tRNA(Arg) + L-arginine + ATP = L-arginyl-tRNA(Arg) + AMP + diphosphate. The chain is Arginine--tRNA ligase from Ligilactobacillus salivarius (strain UCC118) (Lactobacillus salivarius).